Here is a 747-residue protein sequence, read N- to C-terminus: Mediator of RNA polymerase II transcription subunit 25 (747 aa).

An interaction with the Mediator complex region spans residues 1 to 226 (MVPGSEGPAR…PRHMVLVRGL (226 aa)). 2 disordered regions span residues 233 to 274 (GSAP…QYQV) and 299 to 390 (LGPR…PALG). Pro residues-rich tracts occupy residues 263–272 (QPLPPVPPQY) and 326–342 (PQLP…PPAS). Residues 389-543 (LGGQQSVSNK…VNGIRQVITN (155 aa)) are interaction with VP16. Residues 395 to 545 (VSNKLLAWSG…GIRQVITNHK (151 aa)) are interaction with CREBBP. The disordered stretch occupies residues 548–747 (QQQKLEQQQR…MEDDILMDLI (200 aa)). 2 interaction with RARA regions span residues 564–653 (APPG…LLNP) and 640–707 (PGAN…WPAQ). The segment covering 598–611 (ASGATGQPQPQGTA) has biased composition (low complexity). Positions 612 to 634 (QPPPGAPQGPPGAASGPPPPGPI) are enriched in pro residues. An LXXLL motif motif is present at residues 646–650 (LRSLL). Composition is skewed to pro residues over residues 652–664 (NPPP…PPPQ), 673–683 (PGAPALLPPPH), and 691–713 (LGPP…PRAP). Arginine 725 carries the post-translational modification Asymmetric dimethylarginine. Acidic residues predominate over residues 738–747 (MEDDILMDLI).

The protein belongs to the Mediator complex subunit 25 family. As to quaternary structure, component of the Mediator complex, which is composed of MED1, MED4, MED6, MED7, MED8, MED9, MED10, MED11, MED12, MED13, MED13L, MED14, MED15, MED16, MED17, MED18, MED19, MED20, MED21, MED22, MED23, MED24, MED25, MED26, MED27, MED29, MED30, MED31, CCNC, CDK8 and CDC2L6/CDK11. The MED12, MED13, CCNC and CDK8 subunits form a distinct module termed the CDK8 module. Mediator containing the CDK8 module is less active than Mediator lacking this module in supporting transcriptional activation. Individual preparations of the Mediator complex lacking one or more distinct subunits have been variously termed ARC, CRSP, DRIP, PC2, SMCC and TRAP. Interacts with CREBBP. Interacts with ESR1, GR, RARA, RXRA and THRB in a ligand-dependent fashion. Binds the Herpes simplex virus activator VP16. Ubiquitously expressed. Highest levels in brain, heart, kidney, peripheral leukocytes, placenta, skeletal muscle and spleen.

Its subcellular location is the nucleus. In terms of biological role, component of the Mediator complex, a coactivator involved in the regulated transcription of nearly all RNA polymerase II-dependent genes. Mediator functions as a bridge to convey information from gene-specific regulatory proteins to the basal RNA polymerase II transcription machinery. Mediator is recruited to promoters by direct interactions with regulatory proteins and serves as a scaffold for the assembly of a functional preinitiation complex with RNA polymerase II and the general transcription factors. Required for RARA/RXRA-mediated transcription. The protein is Mediator of RNA polymerase II transcription subunit 25 (MED25) of Homo sapiens (Human).